Consider the following 1058-residue polypeptide: Carbamoyl phosphate synthase large chain (1058 aa).

A carboxyphosphate synthetic domain region spans residues 1-401 (MPKRTDIQKI…SLLKACRSLE (401 aa)). ATP contacts are provided by Arg-129, Arg-169, Gly-175, Gly-176, Arg-208, Ile-210, Glu-215, Gly-241, Ile-242, His-243, Gln-284, and Glu-298. An ATP-grasp 1 domain is found at 133–327 (KQLMEELEQP…IAKLAAKIAV (195 aa)). Mg(2+) is bound by residues Gln-284, Glu-298, and Asn-300. Positions 284, 298, and 300 each coordinate Mn(2+). An oligomerization domain region spans residues 402–546 (IGVHHNEIPE…YSTYGWENES (145 aa)). Residues 547-929 (IRSDKESVLV…ALYKAFEASY (383 aa)) form a carbamoyl phosphate synthetic domain region. In terms of domain architecture, ATP-grasp 2 spans 671–861 (EQALKELDIP…MAQVATKLIL (191 aa)). Residues Arg-707, Ser-746, Ile-748, Glu-752, Gly-777, Val-778, His-779, Ser-780, Gln-820, and Glu-832 each contribute to the ATP site. Mg(2+) is bound by residues Gln-820, Glu-832, and Asn-834. Gln-820, Glu-832, and Asn-834 together coordinate Mn(2+). Positions 930–1058 (LHLPTFGNVV…ESRSFVTEAI (129 aa)) constitute an MGS-like domain. The tract at residues 930–1058 (LHLPTFGNVV…ESRSFVTEAI (129 aa)) is allosteric domain.

Belongs to the CarB family. In terms of assembly, composed of two chains; the small (or glutamine) chain promotes the hydrolysis of glutamine to ammonia, which is used by the large (or ammonia) chain to synthesize carbamoyl phosphate. Tetramer of heterodimers (alpha,beta)4. It depends on Mg(2+) as a cofactor. The cofactor is Mn(2+).

It carries out the reaction hydrogencarbonate + L-glutamine + 2 ATP + H2O = carbamoyl phosphate + L-glutamate + 2 ADP + phosphate + 2 H(+). The catalysed reaction is hydrogencarbonate + NH4(+) + 2 ATP = carbamoyl phosphate + 2 ADP + phosphate + 2 H(+). It functions in the pathway amino-acid biosynthesis; L-arginine biosynthesis; carbamoyl phosphate from bicarbonate: step 1/1. The protein operates within pyrimidine metabolism; UMP biosynthesis via de novo pathway; (S)-dihydroorotate from bicarbonate: step 1/3. Functionally, large subunit of the glutamine-dependent carbamoyl phosphate synthetase (CPSase). CPSase catalyzes the formation of carbamoyl phosphate from the ammonia moiety of glutamine, carbonate, and phosphate donated by ATP, constituting the first step of 2 biosynthetic pathways, one leading to arginine and/or urea and the other to pyrimidine nucleotides. The large subunit (synthetase) binds the substrates ammonia (free or transferred from glutamine from the small subunit), hydrogencarbonate and ATP and carries out an ATP-coupled ligase reaction, activating hydrogencarbonate by forming carboxy phosphate which reacts with ammonia to form carbamoyl phosphate. The chain is Carbamoyl phosphate synthase large chain from Streptococcus pneumoniae (strain P1031).